We begin with the raw amino-acid sequence, 1905 residues long: Microtubule cross-linking factor 1 (1905 aa).

Residues 1-249 (METLNGPAGG…SSDREPPRGA (249 aa)) are necessary for colocalization and binding with microtubules. The interval 1–329 (METLNGPAGG…SLGEQSRLVP (329 aa)) is disordered. The segment at 1–508 (METLNGPAGG…QDDSADLRCQ (508 aa)) is necessary for self-assembly, microtubule bundling activity and apicobasal microtubule organization. The segment covering 22-40 (QHHRHHHLHPVAERRRLHR) has biased composition (basic residues). 2 stretches are compositionally biased toward low complexity: residues 63-95 (VPSS…AAPG) and 115-130 (AGAR…LGSR). Phosphoserine occurs at positions 77 and 87. 3 positions are modified to phosphoserine: Ser217, Ser221, and Ser263. The span at 268-283 (ALLAAPLAAGACPGGR) shows a compositional bias: low complexity. Coiled-coil stretches lie at residues 330–404 (AAEE…EQKS), 432–483 (SVRL…SSLK), and 513–718 (KEEA…LQHE). Disordered regions lie at residues 544–563 (YGDV…PSTR), 601–631 (DMRG…LESS), 671–694 (FEPP…GAPL), 737–800 (LRAP…SEPC), and 842–867 (AGLR…GDQQ). The residue at position 549 (Ser549) is a Phosphoserine. Residues 601–616 (DMRGQQEREGPGRDHA) are compositionally biased toward basic and acidic residues. The residue at position 618 (Ser618) is a Phosphoserine. Thr621 bears the Phosphothreonine mark. Residues 680–692 (LGEGASPGAGGGA) are compositionally biased toward gly residues. Phosphoserine is present on Ser685. Positions 741–770 (SPRDSDAESDAGKKESDGEESRLPQPKREG) are enriched in basic and acidic residues. Residue Ser776 is modified to Phosphoserine. A compositionally biased stretch (acidic residues) spans 857–866 (GEEEQGEGDQ). Ser901, Ser923, Lys941, and Thr975 each carry phosphoserine. Positions 1080-1100 (GVQGGHQADGPDHDSDRGCGF) are disordered. Coiled-coil stretches lie at residues 1143–1201 (KALL…ELGS) and 1238–1278 (EKNW…KENS). The segment at 1265-1382 (EFLWRIEQLQ…EENHKGNLQR (118 aa)) is necessary for interaction with MARK2 and apicobasal microtubule bundle formation in polarized epithelial cells. Ser1278 is subject to Phosphoserine. Residues 1346 to 1384 (ALSLDDEPEEPPAHRPEREFRNRLPEEEENHKGNLQRAV) are disordered. Residues 1356–1377 (PPAHRPEREFRNRLPEEEENHK) are compositionally biased toward basic and acidic residues. 3 positions are modified to phosphoserine: Ser1385, Ser1388, and Ser1399. Phosphothreonine is present on Thr1417. Ser1421 carries the phosphoserine modification. The residue at position 1427 (Tyr1427) is a Phosphotyrosine. Residues 1485–1505 (DTMTSPEHCQKQPLRSHVLTE) are disordered. A phosphoserine mark is found at Ser1514, Ser1523, Ser1561, Ser1578, Ser1583, Ser1592, and Ser1661. Positions 1524–1569 (ITAAGGEGPFPTSRARGSPGDTKGGPPEPMLSRWPCTSPRHSRDYV) are disordered. Disordered regions lie at residues 1655–1689 (GSGV…SRQV), 1707–1756 (PKYG…PVHT), 1782–1842 (GLRA…APPG), and 1863–1905 (KEER…PWGL). A phosphothreonine mark is found at Thr1667 and Thr1675. A compositionally biased stretch (low complexity) spans 1678–1687 (SSPSRSLRSR). The necessary for colocalization and binding with microtubules stretch occupies residues 1678 to 1773 (SSPSRSLRSR…SLFNIIDHSP (96 aa)). 2 positions are modified to phosphoserine: Ser1679 and Ser1683. Over residues 1744–1756 (ARSTTTRESPVHT) the composition is skewed to polar residues. 4 positions are modified to phosphoserine: Ser1791, Ser1808, Ser1812, and Ser1814.

This sequence belongs to the SOGA family. As to quaternary structure, homodimer. Associates (via N- and C-terminus domains) with microtubule filaments. Interacts with MARK2; the interaction is direct. In terms of processing, phosphorylated during mitosis in a CDK1-dependent manner.

The protein resides in the lateral cell membrane. It is found in the apical cell membrane. Its subcellular location is the cytoplasm. It localises to the cytoskeleton. The protein localises to the spindle pole. The protein resides in the midbody. Microtubule-associated factor involved in the late phase of epithelial polarization and microtubule dynamics regulation. Plays a role in the development and maintenance of non-centrosomal microtubule bundles at the lateral membrane in polarized epithelial cells. Required for faithful chromosome segregation during mitosis. This Homo sapiens (Human) protein is Microtubule cross-linking factor 1 (MTCL1).